The primary structure comprises 87 residues: Small ribosomal subunit protein eS21 (87 aa).

The protein belongs to the eukaryotic ribosomal protein eS21 family. In terms of assembly, component of the small ribosomal subunit. Mature ribosomes consist of a small (40S) and a large (60S) subunit. The 40S subunit contains about 33 different proteins and 1 molecule of RNA (18S). The 60S subunit contains about 49 different proteins and 3 molecules of RNA (25S, 5.8S and 5S).

Its subcellular location is the cytoplasm. Functionally, required for the processing of the 20S rRNA-precursor to mature 18S rRNA in a late step of the maturation of 40S ribosomal subunits. Has a physiological role leading to 18S rRNA stability. This chain is Small ribosomal subunit protein eS21 (RPS21), found in Candida glabrata (strain ATCC 2001 / BCRC 20586 / JCM 3761 / NBRC 0622 / NRRL Y-65 / CBS 138) (Yeast).